The sequence spans 466 residues: ATP synthase subunit beta (466 aa).

Residue 153-160 participates in ATP binding; it reads GGAGVGKT.

The protein belongs to the ATPase alpha/beta chains family. As to quaternary structure, F-type ATPases have 2 components, CF(1) - the catalytic core - and CF(0) - the membrane proton channel. CF(1) has five subunits: alpha(3), beta(3), gamma(1), delta(1), epsilon(1). CF(0) has three main subunits: a(1), b(2) and c(9-12). The alpha and beta chains form an alternating ring which encloses part of the gamma chain. CF(1) is attached to CF(0) by a central stalk formed by the gamma and epsilon chains, while a peripheral stalk is formed by the delta and b chains.

It localises to the cell membrane. The catalysed reaction is ATP + H2O + 4 H(+)(in) = ADP + phosphate + 5 H(+)(out). Produces ATP from ADP in the presence of a proton gradient across the membrane. The catalytic sites are hosted primarily by the beta subunits. This chain is ATP synthase subunit beta, found in Oenococcus oeni (strain ATCC BAA-331 / PSU-1).